We begin with the raw amino-acid sequence, 91 residues long: UPF0223 protein SAB0963 (91 aa).

The protein belongs to the UPF0223 family.

The sequence is that of UPF0223 protein SAB0963 from Staphylococcus aureus (strain bovine RF122 / ET3-1).